The following is a 282-amino-acid chain: uncharacterized protein (282 aa).

Residues 1–18 (MIDLLVILVSLLFGVVWY) form the signal peptide.

This sequence belongs to the IIV-6 213R family.

This is an uncharacterized protein from Aedes vexans (Inland floodwater mosquito).